The primary structure comprises 243 residues: ATP-dependent dethiobiotin synthetase BioD (243 aa).

ATP is bound at residue 12–17 (DVGKTF). Threonine 16 is a Mg(2+) binding site. Lysine 37 is a catalytic residue. Serine 41 provides a ligand contact to substrate. ATP-binding positions include aspartate 54, 115–118 (EGCG), and 179–180 (NM). Mg(2+) is bound by residues aspartate 54 and glutamate 115.

The protein belongs to the dethiobiotin synthetase family. Homodimer. It depends on Mg(2+) as a cofactor.

The protein localises to the cytoplasm. The catalysed reaction is (7R,8S)-7,8-diammoniononanoate + CO2 + ATP = (4R,5S)-dethiobiotin + ADP + phosphate + 3 H(+). It functions in the pathway cofactor biosynthesis; biotin biosynthesis; biotin from 7,8-diaminononanoate: step 1/2. In terms of biological role, catalyzes a mechanistically unusual reaction, the ATP-dependent insertion of CO2 between the N7 and N8 nitrogen atoms of 7,8-diaminopelargonic acid (DAPA, also called 7,8-diammoniononanoate) to form a ureido ring. In Caldicellulosiruptor bescii (strain ATCC BAA-1888 / DSM 6725 / KCTC 15123 / Z-1320) (Anaerocellum thermophilum), this protein is ATP-dependent dethiobiotin synthetase BioD.